We begin with the raw amino-acid sequence, 209 residues long: dITP/XTP pyrophosphatase (209 aa).

22–27 serves as a coordination point for substrate; that stretch reads SHNQGK. Catalysis depends on aspartate 83, which acts as the Proton acceptor. Aspartate 83 contacts Mg(2+). Substrate contacts are provided by residues serine 84, 167 to 170, lysine 190, and 195 to 196; these read FGYD and HR.

The protein belongs to the HAM1 NTPase family. As to quaternary structure, homodimer. Mg(2+) serves as cofactor.

The catalysed reaction is XTP + H2O = XMP + diphosphate + H(+). The enzyme catalyses dITP + H2O = dIMP + diphosphate + H(+). It carries out the reaction ITP + H2O = IMP + diphosphate + H(+). Its function is as follows. Pyrophosphatase that catalyzes the hydrolysis of nucleoside triphosphates to their monophosphate derivatives, with a high preference for the non-canonical purine nucleotides XTP (xanthosine triphosphate), dITP (deoxyinosine triphosphate) and ITP. Seems to function as a house-cleaning enzyme that removes non-canonical purine nucleotides from the nucleotide pool, thus preventing their incorporation into DNA/RNA and avoiding chromosomal lesions. This Zymomonas mobilis subsp. mobilis (strain ATCC 31821 / ZM4 / CP4) protein is dITP/XTP pyrophosphatase.